The following is a 206-amino-acid chain: MARYLGPKLKLSRREGTDLFLKSGVRAIDTKCKIETIPGQHGARRGRLSDYGVQLREKQKVRRIFGVLEKQFSNYYKEAARQKGNTGENLLQLLETRLDNVVYRMGYASTRAEARQLVSHKAIVVNGVVVNIPSFTVKAEDTVSVREKSKTQARIIAALELADQREKPLWVEVDTKKLEGVFKRVPDRADLSAEINEQLIVELYSK.

In terms of domain architecture, S4 RNA-binding spans 96–156 (TRLDNVVYRM…EKSKTQARII (61 aa)).

The protein belongs to the universal ribosomal protein uS4 family. In terms of assembly, part of the 30S ribosomal subunit. Contacts protein S5. The interaction surface between S4 and S5 is involved in control of translational fidelity.

Functionally, one of the primary rRNA binding proteins, it binds directly to 16S rRNA where it nucleates assembly of the body of the 30S subunit. In terms of biological role, with S5 and S12 plays an important role in translational accuracy. This is Small ribosomal subunit protein uS4 from Colwellia psychrerythraea (strain 34H / ATCC BAA-681) (Vibrio psychroerythus).